A 652-amino-acid chain; its full sequence is MSVTESKAKTERKSSRKPAKTQETVLSALLAQTEEVSVPLASLIKSPLNVRTVPYSAESVSELADSIKGVGLLQNLVVHALPGDRYGVAAGGRRLAALNMLAERDIIPADWPVRVKVIPQELATAASMTENGHRRDMHPAEQIAGFRAMAQEGKTPAQIGDLLGYSPRHVQRMLKLADLAPVILDALAEDRITTEHCQALALENDTARQVQVFEAACQSGWGGKPEVQTIRRLVTESEVAVAGNSKFRFVGADTFSPDELRTDLFSDDEGGYVDCVALDAALLEKLQAVAEHLREAEGWEWCAGRMEPVGFCREDAGTYRSLPEPEAVLTEAEEERLNELMARYDALENQCEESDLLEAEMKLMRCMAKVRAWTPEMRAGSGVVVSWRYGNVCVQRGVQLRSEDDVADNDYRTEQVQEKASVEEISLPLLTKMSSERTLAVQAALMQQSDKSLALLAWTLCLNVFGSGAYSNPARIRLECEHYSLTSDAPSGKEGAAFMAMMAEKARLAALLPDGWARDMTTFLSLSQEVLLSLLSFCTACSIHGVQTREYGHTSRSPLDTLESAIGFHMRDWWQPTKANFFGHLKKPQIIAALNEAGLSGAARDAEKMKKGDAAEHAEHHMKDNRWVPGWMCAPRPQTDATERTDNLADAA.

Basic and acidic residues-rich tracts occupy residues 1-13 and 641-652; these read MSVT…TERK and ATERTDNLADAA. Disordered regions lie at residues 1 to 21 and 628 to 652; these read MSVT…PAKT and VPGW…ADAA.

Belongs to the ParB family.

This is an uncharacterized protein from Escherichia coli O157:H7.